The chain runs to 335 residues: Nuclear transcription factor Y subunit gamma (335 aa).

It belongs to the NFYC/HAP5 subunit family. In terms of assembly, heterotrimeric transcription factor composed of three components, NF-YA, NF-YB and NF-YC. NF-YB and NF-YC must interact and dimerize for NF-YA association and DNA binding.

Its subcellular location is the nucleus. Functionally, component of the sequence-specific heterotrimeric transcription factor (NF-Y) which specifically recognizes a 5'-CCAAT-3' box motif found in the promoters of its target genes. NF-Y can function as both an activator and a repressor, depending on its interacting cofactors. The chain is Nuclear transcription factor Y subunit gamma (Nfyc) from Rattus norvegicus (Rat).